The sequence spans 396 residues: Elongation factor Tu (396 aa).

Residues 10–206 (KPHVNVGTIG…ALDTYIPTPE (197 aa)) form the tr-type G domain. Residues 19–26 (GHVDHGKT) are G1. GTP is bound at residue 19–26 (GHVDHGKT). Thr26 is a Mg(2+) binding site. The interval 60–64 (GITIN) is G2. The segment at 81–84 (DCPG) is G3. GTP-binding positions include 81 to 85 (DCPGH) and 136 to 139 (NKAD). The interval 136 to 139 (NKAD) is G4. Residues 174 to 176 (SAK) form a G5 region.

The protein belongs to the TRAFAC class translation factor GTPase superfamily. Classic translation factor GTPase family. EF-Tu/EF-1A subfamily. Monomer.

It localises to the cytoplasm. It carries out the reaction GTP + H2O = GDP + phosphate + H(+). GTP hydrolase that promotes the GTP-dependent binding of aminoacyl-tRNA to the A-site of ribosomes during protein biosynthesis. The protein is Elongation factor Tu of Janthinobacterium sp. (strain Marseille) (Minibacterium massiliensis).